Consider the following 321-residue polypeptide: Lipoyl synthase (321 aa).

[4Fe-4S] cluster-binding residues include C68, C73, C79, C94, C98, C101, and S308. The region spanning 80–297 (FNHGTATFMI…KELAESIGFT (218 aa)) is the Radical SAM core domain.

This sequence belongs to the radical SAM superfamily. Lipoyl synthase family. The cofactor is [4Fe-4S] cluster.

The protein localises to the cytoplasm. The enzyme catalyses [[Fe-S] cluster scaffold protein carrying a second [4Fe-4S](2+) cluster] + N(6)-octanoyl-L-lysyl-[protein] + 2 oxidized [2Fe-2S]-[ferredoxin] + 2 S-adenosyl-L-methionine + 4 H(+) = [[Fe-S] cluster scaffold protein] + N(6)-[(R)-dihydrolipoyl]-L-lysyl-[protein] + 4 Fe(3+) + 2 hydrogen sulfide + 2 5'-deoxyadenosine + 2 L-methionine + 2 reduced [2Fe-2S]-[ferredoxin]. The protein operates within protein modification; protein lipoylation via endogenous pathway; protein N(6)-(lipoyl)lysine from octanoyl-[acyl-carrier-protein]: step 2/2. Catalyzes the radical-mediated insertion of two sulfur atoms into the C-6 and C-8 positions of the octanoyl moiety bound to the lipoyl domains of lipoate-dependent enzymes, thereby converting the octanoylated domains into lipoylated derivatives. This chain is Lipoyl synthase, found in Shewanella pealeana (strain ATCC 700345 / ANG-SQ1).